Here is a 269-residue protein sequence, read N- to C-terminus: GTP cyclohydrolase FolE2 (269 aa).

The protein belongs to the GTP cyclohydrolase IV family.

The catalysed reaction is GTP + H2O = 7,8-dihydroneopterin 3'-triphosphate + formate + H(+). It functions in the pathway cofactor biosynthesis; 7,8-dihydroneopterin triphosphate biosynthesis; 7,8-dihydroneopterin triphosphate from GTP: step 1/1. In terms of biological role, converts GTP to 7,8-dihydroneopterin triphosphate. The polypeptide is GTP cyclohydrolase FolE2 (Burkholderia multivorans (strain ATCC 17616 / 249)).